The sequence spans 63 residues: Large ribosomal subunit protein bL28 (63 aa).

A disordered region spans residues M1–H20.

The protein belongs to the bacterial ribosomal protein bL28 family.

This chain is Large ribosomal subunit protein bL28, found in Campylobacter fetus subsp. fetus (strain 82-40).